Consider the following 20-residue polypeptide: Unknown protein NF007 from 2D-PAGE (20 aa).

The polypeptide is Unknown protein NF007 from 2D-PAGE (Naegleria fowleri (Brain eating amoeba)).